An 85-amino-acid polypeptide reads, in one-letter code: RNA-binding protein Hfq (85 aa).

Residues 9–68 (DPFLNELRKEKVPVSVFLVNGIKLHGIIDSFDQYVVMLKNSITQMVYKHAISTVVPSRMV) form the Sm domain.

This sequence belongs to the Hfq family. Homohexamer.

Functionally, RNA chaperone that binds small regulatory RNA (sRNAs) and mRNAs to facilitate mRNA translational regulation in response to envelope stress, environmental stress and changes in metabolite concentrations. Also binds with high specificity to tRNAs. This is RNA-binding protein Hfq from Legionella pneumophila (strain Paris).